The sequence spans 335 residues: Phenylalanine--tRNA ligase alpha subunit (335 aa).

Position 262 (Glu262) interacts with Mg(2+).

Belongs to the class-II aminoacyl-tRNA synthetase family. Phe-tRNA synthetase alpha subunit type 1 subfamily. Tetramer of two alpha and two beta subunits. Mg(2+) is required as a cofactor.

Its subcellular location is the cytoplasm. The catalysed reaction is tRNA(Phe) + L-phenylalanine + ATP = L-phenylalanyl-tRNA(Phe) + AMP + diphosphate + H(+). This chain is Phenylalanine--tRNA ligase alpha subunit, found in Prochlorococcus marinus subsp. pastoris (strain CCMP1986 / NIES-2087 / MED4).